The following is a 115-amino-acid chain: uncharacterized protein (115 aa).

This is an uncharacterized protein from Dictyostelium discoideum (Social amoeba).